The following is a 453-amino-acid chain: Tol-Pal system protein TolB (453 aa).

Positions 1–39 are cleaved as a signal peptide; the sequence is MSFIPNTEAEALSALFSRRSVLGATAAGGLLATPLAAFA.

The protein belongs to the TolB family. The Tol-Pal system is composed of five core proteins: the inner membrane proteins TolA, TolQ and TolR, the periplasmic protein TolB and the outer membrane protein Pal. They form a network linking the inner and outer membranes and the peptidoglycan layer.

It is found in the periplasm. Part of the Tol-Pal system, which plays a role in outer membrane invagination during cell division and is important for maintaining outer membrane integrity. The sequence is that of Tol-Pal system protein TolB from Gluconobacter oxydans (strain 621H) (Gluconobacter suboxydans).